Here is a 279-residue protein sequence, read N- to C-terminus: MSWDDDDFDVPATKTAGVSWEDEDNDDPLLESWDIDEEEVARKKKEEEAKKKAEKEALKQKQQEAKNKKLSQKSGERKLLDIDLIDEETRQELLRKAQVTSDLNNAADLFGGLGVANDDDFDVNEHPRERAAKLAAAKQAAKPAAPRLTRDSPLEMHPLFQPTDKAEYEKLRKALATSLQQLAEDSPLNYSSALGIDLIRDAAQPLSLENVRKVISTLNVIVKDKERAERQARLKKAGGTATGGAGKKKAKPAVKTNVSDMYKKDAGDDFDDFDDDDFM.

Disordered stretches follow at residues 1–74 and 229–279; these read MSWD…SQKS and ERQA…DDFM. Residues 20-39 show a composition bias toward acidic residues; sequence WEDEDNDDPLLESWDIDEEE. Positions 34–74 form a coiled coil; it reads DIDEEEVARKKKEEEAKKKAEKEALKQKQQEAKNKKLSQKS. Residues 40–67 are compositionally biased toward basic and acidic residues; the sequence is VARKKKEEEAKKKAEKEALKQKQQEAKN. The segment covering 268 to 279 has biased composition (acidic residues); sequence DDFDDFDDDDFM.

It belongs to the eIF-3 subunit J family. Component of the eukaryotic translation initiation factor 3 (eIF-3) complex.

The protein resides in the cytoplasm. Component of the eukaryotic translation initiation factor 3 (eIF-3) complex, which is involved in protein synthesis of a specialized repertoire of mRNAs and, together with other initiation factors, stimulates binding of mRNA and methionyl-tRNAi to the 40S ribosome. The eIF-3 complex specifically targets and initiates translation of a subset of mRNAs involved in cell proliferation. This is Eukaryotic translation initiation factor 3 subunit J from Meyerozyma guilliermondii (strain ATCC 6260 / CBS 566 / DSM 6381 / JCM 1539 / NBRC 10279 / NRRL Y-324) (Yeast).